Consider the following 180-residue polypeptide: MNVNLEKKYKNTIVKELFKEQRFQSIMQVPVVKKIVVNMGAGDATQNSKVIEDITNELALITGLRPVVTKAKDSIASFKLREGMPIGAKVTLRGKKMYQFLDKLINIALPRVRDFRGLNKDAFDGRGNYTLGIKEQIIFPEIDYDKVKRVRGMDITIVTSATNDADARALLRKMGMPFKK.

Belongs to the universal ribosomal protein uL5 family. In terms of assembly, part of the 50S ribosomal subunit; part of the 5S rRNA/L5/L18/L25 subcomplex. Contacts the 5S rRNA and the P site tRNA. Forms a bridge to the 30S subunit in the 70S ribosome.

Functionally, this is one of the proteins that bind and probably mediate the attachment of the 5S RNA into the large ribosomal subunit, where it forms part of the central protuberance. In the 70S ribosome it contacts protein S13 of the 30S subunit (bridge B1b), connecting the 2 subunits; this bridge is implicated in subunit movement. Contacts the P site tRNA; the 5S rRNA and some of its associated proteins might help stabilize positioning of ribosome-bound tRNAs. The protein is Large ribosomal subunit protein uL5 of Spiroplasma kunkelii.